The following is a 757-amino-acid chain: Dynamin-related protein DNM1 (757 aa).

A Dynamin-type G domain is found at 25–333 (TLDLPILAVV…LLSHIRDKLP (309 aa)). Positions 35-42 (GSQSSGKS) are G1 motif. 35 to 42 (GSQSSGKS) is a binding site for GTP. Residues 61-63 (VTR) are G2 motif. The segment at 175 to 178 (DLPG) is G3 motif. GTP contacts are provided by residues 175–179 (DLPGI) and 244–247 (TKLD). The segment at 244–247 (TKLD) is G4 motif. Residues 274–277 (VNRS) form a G5 motif region. The segment at 557 to 597 (SKLSQQENGQTNGINGTSSISSNIDQDSAKNSDYDDDGIDA) is disordered. The segment covering 567–580 (TNGINGTSSISSNI) has biased composition (low complexity). A Phosphoserine modification is found at serine 629. Residues 670–757 (CELIKRLIVS…KAATLISNIL (88 aa)) form the GED domain.

Belongs to the TRAFAC class dynamin-like GTPase superfamily. Dynamin/Fzo/YdjA family. In terms of assembly, interacts with FIS1 and MDV1.

Its subcellular location is the mitochondrion outer membrane. The catalysed reaction is GTP + H2O = GDP + phosphate + H(+). Functionally, microtubule-associated force-producing protein that participates mitochondrial fission. Fission of mitochondria occurs in many cell types and constitutes an important step in mitochondria morphology, which is balanced between fusion and fission. Functions antagonistically with FZO1. This chain is Dynamin-related protein DNM1 (DNM1), found in Saccharomyces cerevisiae (strain ATCC 204508 / S288c) (Baker's yeast).